Here is a 142-residue protein sequence, read N- to C-terminus: UPF0310 protein PYRAB08750 (142 aa).

The protein belongs to the UPF0310 family.

The polypeptide is UPF0310 protein PYRAB08750 (Pyrococcus abyssi (strain GE5 / Orsay)).